A 160-amino-acid polypeptide reads, in one-letter code: S-ribosylhomocysteine lyase (160 aa).

Fe cation is bound by residues His57, His61, and Cys127.

It belongs to the LuxS family. As to quaternary structure, homodimer. Fe cation is required as a cofactor.

The enzyme catalyses S-(5-deoxy-D-ribos-5-yl)-L-homocysteine = (S)-4,5-dihydroxypentane-2,3-dione + L-homocysteine. Involved in the synthesis of autoinducer 2 (AI-2) which is secreted by bacteria and is used to communicate both the cell density and the metabolic potential of the environment. The regulation of gene expression in response to changes in cell density is called quorum sensing. Catalyzes the transformation of S-ribosylhomocysteine (RHC) to homocysteine (HC) and 4,5-dihydroxy-2,3-pentadione (DPD). The polypeptide is S-ribosylhomocysteine lyase (Streptococcus suis (strain 98HAH33)).